The primary structure comprises 309 residues: WD repeat domain phosphoinositide-interacting protein 4 (309 aa).

A WD 1 repeat occupies 4–42; that stretch reads QPLRGVTSLHFNQDQSCFCCAMETGVRIYNVEPLMEKGH. Positions 180 to 183 match the L/FRRG motif motif; sequence LRRG. One copy of the WD 2 repeat lies at 184 to 223; sequence TDPATLYCINFSHDSSFLCASSDKGTVHIFALKDTRLNRR.

Belongs to the WD repeat PROPPIN family. In terms of assembly, interacts with WIPI1. Interacts with WIPI2. Interacts with ATG2A and ATG2B. Interacts with ULK1. May interact with the PRKAA1, PRKAA2, PRKAB1 and PRKAG1 subunits of the AMPK kinase. May interact with NUDC.

Its subcellular location is the preautophagosomal structure. The protein localises to the cytoplasm. Component of the autophagy machinery that controls the major intracellular degradation process by which cytoplasmic materials are packaged into autophagosomes and delivered to lysosomes for degradation. Binds phosphatidylinositol 3-phosphate (PtdIns3P). Activated by the STK11/AMPK signaling pathway upon starvation, WDR45 is involved in autophagosome assembly downstream of WIPI2, regulating the size of forming autophagosomes. Together with WIPI1, promotes ATG2 (ATG2A or ATG2B)-mediated lipid transfer by enhancing ATG2-association with phosphatidylinositol 3-monophosphate (PI3P)-containing membranes. Probably recruited to membranes through its PtdIns3P activity. The polypeptide is WD repeat domain phosphoinositide-interacting protein 4 (Wdr45) (Rattus norvegicus (Rat)).